We begin with the raw amino-acid sequence, 362 residues long: Cobalt-precorrin-5B C(1)-methyltransferase (362 aa).

This sequence belongs to the CbiD family.

It catalyses the reaction Co-precorrin-5B + S-adenosyl-L-methionine = Co-precorrin-6A + S-adenosyl-L-homocysteine. It functions in the pathway cofactor biosynthesis; adenosylcobalamin biosynthesis; cob(II)yrinate a,c-diamide from sirohydrochlorin (anaerobic route): step 6/10. In terms of biological role, catalyzes the methylation of C-1 in cobalt-precorrin-5B to form cobalt-precorrin-6A. This chain is Cobalt-precorrin-5B C(1)-methyltransferase, found in Burkholderia multivorans (strain ATCC 17616 / 249).